The following is a 529-amino-acid chain: Tyrosinase (529 aa).

The N-terminal stretch at 1 to 18 (MLLAVLYCLLWSFQTSAG) is a signal peptide. The Lumenal, melanosome segment spans residues 19-476 (HFPRACVSSK…YLEQASRIWS (458 aa)). Residues Asn86, Asn111, and Asn161 are each glycosylated (N-linked (GlcNAc...) asparagine). Cu cation is bound by residues His180, His202, and His211. Residue Asn230 is glycosylated (N-linked (GlcNAc...) asparagine). Positions 287 to 313 (SLCNGTPEGPLQRNPGNHDKSRTPRLP) are disordered. A glycan (N-linked (GlcNAc...) asparagine) is linked at Asn337. Cu cation is bound by residues His363 and His367. Asn371 carries an N-linked (GlcNAc...) asparagine glycan. His390 is a Cu cation binding site. The chain crosses the membrane as a helical span at residues 477–497 (WLLGAAMVGAVLTALLAGLVS). Residues 498–529 (LLCRHKRKQLPEEKQPLLMEKEDYHSLYQSHL) lie on the Cytoplasmic side of the membrane.

This sequence belongs to the tyrosinase family. Forms an OPN3-dependent complex with DCT in response to blue light in melanocytes. It depends on Cu(2+) as a cofactor. Post-translationally, glycosylated.

It localises to the melanosome membrane. The protein resides in the melanosome. The catalysed reaction is 2 L-dopa + O2 = 2 L-dopaquinone + 2 H2O. It catalyses the reaction L-tyrosine + O2 = L-dopaquinone + H2O. The enzyme catalyses 2 5,6-dihydroxyindole-2-carboxylate + O2 = 2 indole-5,6-quinone-2-carboxylate + 2 H2O. This is a copper-containing oxidase that functions in the formation of pigments such as melanins and other polyphenolic compounds. Catalyzes the initial and rate limiting step in the cascade of reactions leading to melanin production from tyrosine. In addition to hydroxylating tyrosine to DOPA (3,4-dihydroxyphenylalanine), also catalyzes the oxidation of DOPA to DOPA-quinone, and possibly the oxidation of DHI (5,6-dihydroxyindole) to indole-5,6 quinone. The protein is Tyrosinase (TYR) of Gorilla gorilla gorilla (Western lowland gorilla).